Reading from the N-terminus, the 62-residue chain is Large ribosomal subunit protein bL28 (62 aa).

This sequence belongs to the bacterial ribosomal protein bL28 family.

The chain is Large ribosomal subunit protein bL28 from Wolinella succinogenes (strain ATCC 29543 / DSM 1740 / CCUG 13145 / JCM 31913 / LMG 7466 / NCTC 11488 / FDC 602W) (Vibrio succinogenes).